The chain runs to 334 residues: Endochitinase 3 (334 aa).

Residues 1–23 (MRLLEFTALSSLLVLFLLLAVSA) form the signal peptide. Residues 24-65 (EQCGKQAGGARCPSGMCCSNFGWCGNTQDYCGPGKCQSQCPS) form the Chitin-binding type-1 domain. 4 disulfide bridges follow: Cys-26-Cys-41, Cys-35-Cys-47, Cys-40-Cys-54, and Cys-59-Cys-63. The interval 64–84 (PSGPGPTPRPPTPTPGPSTGD) is disordered. The span at 66–79 (GPGPTPRPPTPTPG) shows a compositional bias: pro residues. 4-hydroxyproline occurs at positions 73, 74, and 76. 3 cysteine pairs are disulfide-bonded: Cys-106-Cys-168, Cys-180-Cys-188, and Cys-287-Cys-319. Glu-150 functions as the Proton donor in the catalytic mechanism. The propeptide at 328-334 (GLLLETM) is removed in mature form.

Belongs to the glycosyl hydrolase 19 family. Chitinase class I subfamily. The 4-hydroxyproline residues are not glycosylated in this plant vacuolar protein.

The protein resides in the vacuole. It catalyses the reaction Random endo-hydrolysis of N-acetyl-beta-D-glucosaminide (1-&gt;4)-beta-linkages in chitin and chitodextrins.. Defense against chitin-containing fungal pathogens. The protein is Endochitinase 3 (CHN14) of Nicotiana tabacum (Common tobacco).